The sequence spans 156 residues: Small ribosomal subunit protein uS7 (156 aa).

Belongs to the universal ribosomal protein uS7 family. Part of the 30S ribosomal subunit. Contacts proteins S9 and S11.

Functionally, one of the primary rRNA binding proteins, it binds directly to 16S rRNA where it nucleates assembly of the head domain of the 30S subunit. Is located at the subunit interface close to the decoding center, probably blocks exit of the E-site tRNA. This Mycobacterium bovis (strain ATCC BAA-935 / AF2122/97) protein is Small ribosomal subunit protein uS7.